The sequence spans 1495 residues: MALFRALYIIWVFLLIPLFNAEEFTPKVTRTLSRYVFDIVNFDDSNTLIRADEDSVEISFDAGENWKTIDGIEEPIESFVVDPFRGHDRAFAFVKTAPKFYVTDDQGKSWRPLTIPISEKASNYFCGITTHPIKKKHLIIRCDLLTINDSGVMHVGREIYTTNDGVSFSQVKPSFGKIDGHISTARCDFIKSSEDSDLGGNDASILCLFRNTEYIESTGSTIDKSELILSADGGETFKELVQFKDKVVRRYEILKYHVVVLTQDDMYNEMSSMDIWISNDVCTFQIAHTPTKIRHVNMGQIHEDSIGRIVLSVSRERDDEDSNQPGAAEVLISDSEGLKFLPIKWIPNNQFGYINVAYPGFLKGTFFGSFHPFIEYSDRKRKYSRQKVREETKVSVDNGLTWSNLKVVDRENVDSFGCDVTKPERCSLHTYFYDLRNLRPSAGIMMISGIVGDGSVYDWNEEKTFISRDSGLTWRLVHNSTGLYTTGDLGNIIMYIPYRSNENGDVPSKFYYSLDQGKTWGEYDLIMPIYPYRLISTISDGSGSKFILTGTSITDDPISITYSIDFSAVFDYKSCEEGDFEDWNLADGKCVNGAKYKYRRRKQDAQCLVKKAFKDLSLDETPCNSCTGSDYECSFEFVRDAKGDCIPDYNLIALSDICDKSKDKSVLVEPLQLIKGDKCKTPMKIEPVDIPCDEIPEEGSSDKEIVTTENKFDFEIKFYQYFDTVADESLVMLNSIGDAYISHDGGQTIKRFDTDGEKIVEVVFNPYFNSSAYLFGSKGNIFLTHDRGYSFMIAKLPEARQLGMPLDFSAKAQDTFIYYGGKNCESILSPECHAVAYLTKDGGETFTEMLDNAIHCEFAGTLFKYPSNDDMVMCQVKEKFSQTRSLVSSTDFFQDDKKTVFENIIGYLSTGGYIIVAVPHENNELRAYVTNDGAEFAEAKFPYDEDIGKQDAFTILGSEEGSIFLHLATNLESGHDFGNLLKSNSNGTSFVTLEHAVNRNTFGYVDFEKVQGLEGIIITNIVSNSEKVGEHKGDEQLKTKITFNDGSDWNFLKPPKKDSEGKKFLCDSVSLDKCSLHLHGYTERKDIRDTYSSGSALGMMFGVGNVGDRLLPYEECSTFLTTDGGETWTEVKKGPHQWEYGDHGGVLVLVPENAETDSISYSTDFGKTWKDYKFCGDKVLVKDVITVPRDSALRFLLFGEAKNMGSGSFRTYTIDFRNIFERQCEFDITGKKRADFKYSPLGSRTDCLFGHKTEFLRKTDEKCFIGNIPLSEFSRNVKNCSCTRQDFECDYNFYKASDGTCKLVKGLSSANGADICKKEPDLIEYYDSSGYRKIPLSTCKGGLKLDAHLAPHPCPGKEKAFREKYPINTGAYALVFVTILLVIFFAAWFVYDRGIRRNGGFSRFEEIRLGDDGLIENNRTDRVVNIIVRLGLCISLITKSAFQRAKAGTAQLSSKFRARFGNKKGATYSSLLHDQLSDAFQRAKAGTAQLSCFKI.

The signal sequence occupies residues Met-1–Ala-21. The Lumenal segment spans residues Glu-23–Thr-1369. 2 BNR repeats span residues Ile-58–Lys-67 and Tyr-101–Arg-111. The N-linked (GlcNAc...) asparagine glycan is linked to Asn-148. BNR repeat units lie at residues Leu-229–Lys-238, Val-394–Ser-403, and Phe-465–Arg-475. A glycan (N-linked (GlcNAc...) asparagine) is linked at Asn-479. 2 BNR repeats span residues Tyr-511–Trp-520 and Tyr-740–Lys-750. Residue Asn-769 is glycosylated (N-linked (GlcNAc...) asparagine). One copy of the BNR 8 repeat lies at Tyr-837–Thr-847. An N-linked (GlcNAc...) asparagine glycan is attached at Asn-986. BNR repeat units follow at residues Phe-1119 to Thr-1129 and Tyr-1161 to Lys-1170. N-linked (GlcNAc...) asparagine glycosylation is present at Asn-1279. The helical transmembrane segment at Gly-1370 to Val-1390 threads the bilayer. Residues Tyr-1391 to Ile-1495 are Cytoplasmic-facing.

It belongs to the VPS10-related sortilin family.

The protein localises to the golgi apparatus. It is found in the trans-Golgi network membrane. In terms of biological role, functions as a sorting receptor in the Golgi compartment required for the intracellular sorting and delivery of soluble vacuolar proteins, like carboxypeptidase Y (CPY) and proteinase A. In Saccharomyces cerevisiae (strain Lalvin EC1118 / Prise de mousse) (Baker's yeast), this protein is VPS10 homolog 2 (VTH2).